Consider the following 75-residue polypeptide: Pi-hexatoxin-Hi1a (75 aa).

6 cysteine pairs are disulfide-bonded: C3-C18, C10-C23, C17-C33, C40-C55, C47-C60, and C54-C71. Domain repeat units follow at residues 3 to 33 (CIRK…FEVC) and 40 to 71 (CLVK…SSVC). The tract at residues 3-71 (CIRKWLSCVD…KRSGNKSSVC (69 aa)) is 2 X approximate repeats with cysteine pattern C-C-CC-C-C.

This sequence belongs to the psalmotoxin-1 family. Double-knot toxin subfamily. In terms of tissue distribution, expressed by the venom gland.

The protein resides in the secreted. This toxin potently and selectively inhibits ASIC1a (IC(50)=0.4 nM on rASIC1a and IC(50)=0.52 nM on hASIC1a), an isoform of the gene ASIC1. It incompletely inhibits ASIC1a activation in a pH-independent and slowly reversible manner (Tau(off)=14.2 minutes for rASIC1a and 31.8 minutes for hASIC1a). This toxin acts by binding to and stabilizing the closed state of the channel, thereby impeding the transition into a conducting state. This toxin may bind to the acidic pocket of ASIC1a, since mutation of a key residue of this pocket (Arg-350) abolishes the ability of the toxin to inhibit ASIC1a. In addition, it shows antiparasitic activities, since it moderately inhibits the larval development of the major pathogenic nematode of ruminants (H.contortus, IC(50)=22.9 uM). In vivo, this toxin protects the brain from neuronal injury when administered up to 8 hours after stroke onset. The protein is Pi-hexatoxin-Hi1a of Hadronyche infensa (Fraser island funnel-web spider).